The sequence spans 168 residues: G/U mismatch-specific DNA glycosylase (168 aa).

Belongs to the uracil-DNA glycosylase (UDG) superfamily. TDG/mug family. In terms of assembly, binds DNA as a monomer.

It is found in the cytoplasm. The catalysed reaction is Specifically hydrolyzes mismatched double-stranded DNA and polynucleotides, releasing free uracil.. Its function is as follows. Excises ethenocytosine and uracil, which can arise by alkylation or deamination of cytosine, respectively, from the corresponding mispairs with guanine in ds-DNA. It is capable of hydrolyzing the carbon-nitrogen bond between the sugar-phosphate backbone of the DNA and the mispaired base. The complementary strand guanine functions in substrate recognition. Required for DNA damage lesion repair in stationary-phase cells. The chain is G/U mismatch-specific DNA glycosylase from Escherichia coli O157:H7 (strain EC4115 / EHEC).